A 403-amino-acid chain; its full sequence is Ribonuclease T2-like (403 aa).

A signal peptide spans methionine 1–cysteine 19. 4 disulfides stabilise this stretch: cysteine 36-cysteine 55, cysteine 44-cysteine 91, cysteine 54-cysteine 158, and cysteine 99-cysteine 150. Asparagine 78 carries an N-linked (GlcNAc...) asparagine glycan. Active-site residues include histidine 84, glutamate 143, and histidine 147. N-linked (GlcNAc...) asparagine glycosylation is present at asparagine 175. A disulfide bridge connects residues cysteine 224 and cysteine 259. Positions proline 268–glutamate 288 are disordered.

This sequence belongs to the RNase T2 family.

Its subcellular location is the vacuole lumen. It is found in the cytoplasm. The enzyme catalyses a ribonucleotidyl-ribonucleotide-RNA + H2O = a 3'-end 3'-phospho-ribonucleotide-RNA + a 5'-end dephospho-ribonucleoside-RNA + H(+). Its function is as follows. Rnase which modulates cell survival under stress conditions. Released from the vacuole to the cytoplasm during stress to promote tRNA and rRNA cleavage and to activate separately a downstream pathway that promotes cell death. Involved in cell size, vacuolar morphology and growth at high temperatures and high salt concentration. This Debaryomyces hansenii (strain ATCC 36239 / CBS 767 / BCRC 21394 / JCM 1990 / NBRC 0083 / IGC 2968) (Yeast) protein is Ribonuclease T2-like (RNY1).